The sequence spans 1039 residues: Integrin alpha-IIb (1039 aa).

The first 31 residues, 1–31 (MARALCPLQALWLLEWVLLLLGPCAAPPAWA), serve as a signal peptide directing secretion. Topologically, residues 32–993 (LNLDPVQLTF…TQLLRALEER (962 aa)) are extracellular. FG-GAP repeat units follow at residues 35 to 96 (DPVQ…GGQC), 110 to 173 (VGSQ…RRAE), 187 to 238 (VEND…FSSY), 251 to 305 (SLSF…DSYY), 306 to 371 (QRLH…PHAL), 373 to 432 (APSL…GLRS), and 435 to 496 (SQVL…VQDS). Asn46 is a glycosylation site (N-linked (GlcNAc...) asparagine). Disulfide bonds link Cys87–Cys96, Cys138–Cys161, and Cys177–Cys198. Glu274, Asp276, and Asp278 together coordinate Ca(2+). Residue Asn280 is glycosylated (N-linked (GlcNAc...) asparagine). Positions 281, 283, 328, 330, 332, 334, 336, 396, 398, 400, 402, 404, 457, 459, 461, 463, and 465 each coordinate Ca(2+). 2 disulfides stabilise this stretch: Cys504/Cys515 and Cys521/Cys576. Asn601 is a glycosylation site (N-linked (GlcNAc...) asparagine). 4 disulfides stabilise this stretch: Cys633-Cys639, Cys705-Cys718, Cys857-Cys921, and Cys911-Cys916. N-linked (GlcNAc...) asparagine glycosylation is present at Asn711. O-linked (GalNAc...) serine; in variant S-874 glycosylation is present at Ile874. Residue Ser878 is glycosylated (O-linked (GalNAc...) serine). Gln891 carries the post-translational modification Pyrrolidone carboxylic acid; in light chain form 1. Residue Asn962 is glycosylated (N-linked (GlcNAc...) asparagine). A helical membrane pass occupies residues 994 to 1019 (AIPIWWVLVGVLGGLLLLTILVLAMW). At 1020 to 1039 (KVGFFKRNRPPLEEDDEEGE) the chain is on the cytoplasmic side. Positions 1022–1026 (GFFKR) match the GFFKR motif motif.

The protein belongs to the integrin alpha chain family. Heterodimer of an alpha and a beta subunit. The alpha subunit is composed of a heavy and a light chain linked by a disulfide bond. Alpha-IIb associates with beta-3. Directly interacts with RNF181. Interacts (via C-terminus cytoplasmic tail region) with CIB1; the interaction is direct and calcium-dependent. Interacts (via C-terminus cytoplasmic tail region) with CIB2, CIB3 and CIB4; the interactions are stabilized/increased in a calcium and magnesium-dependent manner. ITGA2B:ITGB3 interacts with PPIA/CYPA; the interaction is ROS and PPIase activity-dependent and is increased in the presence of thrombin. ITGA2B:ITGB3 interacts with SELP (via C-type lectin domain); the interaction mediates cell-cell interaction and adhesion. In terms of processing, cleaved by ELANE; the cleavage promotes activation of platelet fibrinogen receptor integrin alpha-IIb/beta-3. As to expression, isoform 1 and isoform 2 are expressed in platelets and megakaryocytes, but not in reticulocytes. Not detected in Jurkat, nor in U937 cell lines. Isoform 3 is expressed in prostate adenocarcinoma, as well as in several erythroleukemia, prostate adenocarcinoma and melanoma cell lines, including PC-3, DU-145, HEL, WM983A, WM983B and WM35. Not detected in platelets, nor in normal prostate (at protein level).

The protein resides in the membrane. Its function is as follows. Integrin alpha-IIb/beta-3 is a receptor for fibronectin, fibrinogen, plasminogen, prothrombin, thrombospondin and vitronectin. It recognizes the sequence R-G-D in a wide array of ligands. It recognizes the sequence H-H-L-G-G-G-A-K-Q-A-G-D-V in fibrinogen gamma chain. Following activation integrin alpha-IIb/beta-3 brings about platelet/platelet interaction through binding of soluble fibrinogen. This step leads to rapid platelet aggregation which physically plugs ruptured endothelial cell surface. This Homo sapiens (Human) protein is Integrin alpha-IIb (ITGA2B).